The sequence spans 432 residues: Neuronal pentraxin-1 (432 aa).

The N-terminal stretch at 1-22 (MLAGRAARTCALLALCLLGSGA) is a signal peptide. The interval 88 to 122 (RCESQSTLDSGPGEARSGGGRKQPGSGKNTMGDLS) is disordered. 2 N-linked (GlcNAc...) asparagine glycosylation sites follow: Asn154 and Asn193. Positions 226 to 428 (DKFQLTFPLR…GATKWTFEAC (203 aa)) constitute a Pentraxin (PTX) domain. A disulfide bond links Cys256 and Cys316. Positions 280, 358, 359, 360, and 370 each coordinate Ca(2+).

As to quaternary structure, homooligomer or heterooligomer (probably pentamer) with neuronal pentraxin receptor (NPTXR). It depends on Ca(2+) as a cofactor. Expressed in brain and kidney.

The protein localises to the secreted. It localises to the cytoplasmic vesicle. It is found in the secretory vesicle. Its subcellular location is the endoplasmic reticulum. Functionally, may be involved in mediating uptake of synaptic material during synapse remodeling or in mediating the synaptic clustering of AMPA glutamate receptors at a subset of excitatory synapses. This is Neuronal pentraxin-1 (Nptx1) from Mus musculus (Mouse).